The chain runs to 93 residues: MKFELLNQVNLKKDHEIRIYSTCIGCTQCVRACPTDVLEMVPSTTCKAKQVVTVPRIEDCVGCKRCESACPTDFLSIRVYLGGETLRSMGLAY.

2 4Fe-4S ferredoxin-type domains span residues 13–43 (KDHE…MVPS) and 50–80 (QVVT…IRVY). Residues Cys-23, Cys-26, Cys-29, Cys-33, Cys-60, Cys-63, Cys-66, and Cys-70 each coordinate [4Fe-4S] cluster.

As to quaternary structure, the eukaryotic PSI reaction center is composed of at least 11 subunits. [4Fe-4S] cluster is required as a cofactor.

It localises to the plastid. It is found in the chloroplast thylakoid membrane. It carries out the reaction reduced [plastocyanin] + hnu + oxidized [2Fe-2S]-[ferredoxin] = oxidized [plastocyanin] + reduced [2Fe-2S]-[ferredoxin]. Functionally, apoprotein for the two 4Fe-4S centers FA and FB of photosystem I (PSI); essential for photochemical activity. FB is the terminal electron acceptor of PSI, donating electrons to ferredoxin. The C-terminus interacts with PsaA/B/D and helps assemble the protein into the PSI complex. Required for binding of PsaD and PsaE to PSI. PSI is a plastocyanin-ferredoxin oxidoreductase, converting photonic excitation into a charge separation, which transfers an electron from the donor P700 chlorophyll pair to the spectroscopically characterized acceptors A0, A1, FX, FA and FB in turn. The sequence is that of Photosystem I iron-sulfur center from Bigelowiella natans (Pedinomonas minutissima).